A 372-amino-acid chain; its full sequence is Cell division protein FtsZ 1 (372 aa).

Residues 51–55 (GAGCN), 138–140 (GTG), glutamate 169, arginine 173, and aspartate 216 contribute to the GTP site. Acidic residues predominate over residues 350–360 (PEEETPLETPE). A disordered region spans residues 350 to 372 (PEEETPLETPEESPSIEISIPEL). Over residues 361-372 (ESPSIEISIPEL) the composition is skewed to low complexity.

This sequence belongs to the FtsZ family. In terms of assembly, homodimer. Polymerizes to form a dynamic ring structure in a strictly GTP-dependent manner. Interacts directly with several other division proteins.

It localises to the cytoplasm. Its function is as follows. Essential cell division protein that forms a contractile ring structure (Z ring) at the future cell division site. The regulation of the ring assembly controls the timing and the location of cell division. One of the functions of the FtsZ ring is to recruit other cell division proteins to the septum to produce a new cell wall between the dividing cells. Binds GTP and shows GTPase activity. The chain is Cell division protein FtsZ 1 from Pyrococcus furiosus (strain ATCC 43587 / DSM 3638 / JCM 8422 / Vc1).